Consider the following 431-residue polypeptide: Phosphoribosylamine--glycine ligase (431 aa).

The region spanning 109–316 (KDFLARHGIP…LVDLVEAAID (208 aa)) is the ATP-grasp domain. 135-196 (VREKGAPIVV…EEFLDGEEAS (62 aa)) is a binding site for ATP. Mg(2+) contacts are provided by Glu-286 and Asn-288.

This sequence belongs to the GARS family. Mg(2+) serves as cofactor. The cofactor is Mn(2+).

The enzyme catalyses 5-phospho-beta-D-ribosylamine + glycine + ATP = N(1)-(5-phospho-beta-D-ribosyl)glycinamide + ADP + phosphate + H(+). It participates in purine metabolism; IMP biosynthesis via de novo pathway; N(1)-(5-phospho-D-ribosyl)glycinamide from 5-phospho-alpha-D-ribose 1-diphosphate: step 2/2. The chain is Phosphoribosylamine--glycine ligase from Xanthomonas campestris pv. campestris (strain ATCC 33913 / DSM 3586 / NCPPB 528 / LMG 568 / P 25).